Reading from the N-terminus, the 110-residue chain is Insulin (110 aa).

The first 24 residues, 1–24 (MAPWTRLLPLLALLSLWIPAPTRA), serve as a signal peptide directing secretion. 3 cysteine pairs are disulfide-bonded: C31-C96, C43-C109, and C95-C100. Residues 57 to 87 (EAEDLQGKDAELGEAPGAGGLQPSALEAPLQ) constitute a propeptide, c peptide. Residues 60-80 (DLQGKDAELGEAPGAGGLQPS) form a disordered region.

This sequence belongs to the insulin family. Heterodimer of a B chain and an A chain linked by two disulfide bonds.

It is found in the secreted. Insulin decreases blood glucose concentration. It increases cell permeability to monosaccharides, amino acids and fatty acids. It accelerates glycolysis, the pentose phosphate cycle, and glycogen synthesis in liver. This Felis catus (Cat) protein is Insulin (INS).